Consider the following 349-residue polypeptide: MEENKKTMEKSVGFTEEQDALVVKSWNAMKKNSGDLSLKFFKKILEIAPPAKQMFSFLKDSNVPLEHNPKLKPHAMSVFLMTCESAVQLRKAGKVTVRESNLKKLGATHFKTGVQDEHFEVTKQALLETIEEAIPEMWYPAMKNAWAEAHDRLANAIKAEMKEAHDQLDSANLIINMEENTGSCFTEEQEALVVKSWNAIKNNSEDLSLKFFKRIFEIAPPAKQLFSFLRDSNVPLEQNPKLKPHAMSVFLMTCESAVQLRKAGKVTVSESNLKKLGATHFKSGVKDEHFEVTKQVLLETIKEALPEMWSPAMENAWGEAHDQLANAIKAEMKKADHDHQANVEDKPSS.

2 consecutive Globin domains span residues 13–162 and 184–333; these read GFTE…AEMK and CFTE…AEMK. 12 residues coordinate heme b: Ser56, Lys70, His74, Lys104, Thr108, His109, Ser227, Lys241, His245, Lys275, Thr279, and His280.

The protein belongs to the plant globin family. In terms of assembly, monomer. Requires heme b as cofactor.

Its subcellular location is the cytoplasm. It localises to the nucleus. The enzyme catalyses Fe(III)-heme b-[protein] + nitric oxide + H2O = Fe(II)-heme b-[protein] + nitrite + 2 H(+). Functionally, phytoglobin that regulates the fine tuning of nitric oxide (NO) concentration in the cytosol in response to sudden changes in O(2) availability, and performs both symbiotic and nonsymbiotic functions. Exhibits NO dioxygenase activity in the presence of O(2) but nitrite reductase (NiR) activity in the absence of O(2) (e.g. during flooding or in waterlogged soil). May not function as an oxygen storage or transport protein. Extremely reactive toward the physiological ligands O(2), nitric oxide (NO), and nitrite with a very high affinity for O(2) through an hexacoordinate heme iron because of a very low dissociation constant. The protein is Anaerobic nitrite reductase Glb1-3 of Medicago truncatula (Barrel medic).